The sequence spans 255 residues: MTMTTMPESLNSPVSGKAVFMEFGPPNQQMSPSPMSHGHYSMHCLHSAGHSQPDGAYSSASSFSRPLGYPYVNSVSSHASSPYISSVQSYPGSASLAQSRLEDPGADSEKSTVVEGGEVRFNGKGKKIRKPRTIYSSLQLQALNRRFQQTQYLALPERAELAASLGLTQTQVKIWFQNKRSKFKKLMKQGGAALEGSALANGRALSAGSPPVPPGWNPNSSSGKGSGSSAGSYVPSYTSWYPSAHQEAMQQPQLM.

The span at 1-14 (MTMTTMPESLNSPV) shows a compositional bias: polar residues. Disordered stretches follow at residues 1 to 38 (MTMT…MSHG) and 95 to 118 (SLAQ…EGGE). A compositionally biased stretch (low complexity) spans 25–36 (PPNQQMSPSPMS). The segment covering 100-112 (RLEDPGADSEKST) has biased composition (basic and acidic residues). Residues 128–187 (IRKPRTIYSSLQLQALNRRFQQTQYLALPERAELAASLGLTQTQVKIWFQNKRSKFKKLM) constitute a DNA-binding region (homeobox). Residues 204–233 (ALSAGSPPVPPGWNPNSSSGKGSGSSAGSY) form a disordered region. The span at 217 to 232 (NPNSSSGKGSGSSAGS) shows a compositional bias: low complexity.

Belongs to the distal-less homeobox family. In terms of assembly, interacts with SMAD4 (via homeobox DNA-binding domain). Interacts (via homeobox DNA-binding domain) with POU4F2; this interaction suppresses DLX1-mediated transcriptional activity in postnatal retina and enhances retinal ganglion cell (RGC) differentiation. As to expression, expressed in a restricted region of the developing brain, within the diencephalon and the adjacent telencephalic regions.

The protein localises to the nucleus. Plays a role as a transcriptional activator or repressor. Inhibits several cytokine signaling pathways, such as TGFB1, activin-A/INHBA and BMP4 by interfering with the transcriptional stimulatory activity of transcription factors, such as MSX2, FAST2, SMAD2 and SMAD3 during hematopoietic cell differentiation. Plays a role in terminal differentiation of interneurons, such as amacrine and bipolar cells in the developing retina. Likely to play a regulatory role in the development of the ventral forebrain. May play a role in craniofacial patterning and morphogenesis and may be involved in the early development of diencephalic subdivisions. This is Homeobox protein DLX-1 (Dlx1) from Mus musculus (Mouse).